Here is a 335-residue protein sequence, read N- to C-terminus: Beta-ketoacyl-[acyl-carrier-protein] synthase III (335 aa).

Active-site residues include Cys-118 and His-259. An ACP-binding region spans residues 260–264; it reads QANER. The active site involves Asn-289.

Belongs to the thiolase-like superfamily. FabH family. As to quaternary structure, homodimer.

It localises to the cytoplasm. It catalyses the reaction malonyl-[ACP] + acetyl-CoA + H(+) = 3-oxobutanoyl-[ACP] + CO2 + CoA. The protein operates within lipid metabolism; fatty acid biosynthesis. Functionally, catalyzes the condensation reaction of fatty acid synthesis by the addition to an acyl acceptor of two carbons from malonyl-ACP. Catalyzes the first condensation reaction which initiates fatty acid synthesis and may therefore play a role in governing the total rate of fatty acid production. Possesses both acetoacetyl-ACP synthase and acetyl transacylase activities. Its substrate specificity determines the biosynthesis of branched-chain and/or straight-chain of fatty acids. The chain is Beta-ketoacyl-[acyl-carrier-protein] synthase III from Chlamydia caviae (strain ATCC VR-813 / DSM 19441 / 03DC25 / GPIC) (Chlamydophila caviae).